Consider the following 418-residue polypeptide: Tryptophan synthase beta chain 1 (418 aa).

An N6-(pyridoxal phosphate)lysine modification is found at lysine 99.

The protein belongs to the TrpB family. Tetramer of two alpha and two beta chains. The cofactor is pyridoxal 5'-phosphate.

It carries out the reaction (1S,2R)-1-C-(indol-3-yl)glycerol 3-phosphate + L-serine = D-glyceraldehyde 3-phosphate + L-tryptophan + H2O. The protein operates within amino-acid biosynthesis; L-tryptophan biosynthesis; L-tryptophan from chorismate: step 5/5. The beta subunit is responsible for the synthesis of L-tryptophan from indole and L-serine. This chain is Tryptophan synthase beta chain 1 (trpB1), found in Corynebacterium efficiens (strain DSM 44549 / YS-314 / AJ 12310 / JCM 11189 / NBRC 100395).